Here is a 36-residue protein sequence, read N- to C-terminus: Serine protease inhibitor 2 (36 aa).

The 36-residue stretch at 1 to 36 folds into the Pacifastin domain; that stretch reads EISCEPGTTFQDKCNTCRCGKDGKSAAGCTLKACPQ. 3 cysteine pairs are disulfide-bonded: C4–C19, C14–C34, and C17–C29.

Belongs to the protease inhibitor I19 family. In terms of tissue distribution, expressed in hemolymph.

It localises to the secreted. In terms of biological role, probable serine protease inhibitor. This Melanoplus sanguinipes (Migratory grasshopper) protein is Serine protease inhibitor 2.